We begin with the raw amino-acid sequence, 76 residues long: Putative cation transport regulator ChaB (76 aa).

It belongs to the ChaB family. Monomer.

In terms of biological role, might be a regulator of the sodium-potassium/proton antiporter ChaA. In Escherichia coli O157:H7, this protein is Putative cation transport regulator ChaB.